We begin with the raw amino-acid sequence, 246 residues long: MSDSQDKNYISFEKTEIGQIVSEAPAEKYVSFQKKYFNRLTIIGDSITQKGFTPGGYCAELMNFYQRRLRVDVWGFSGYTSRHVLRYLPEIPLEIDSTKLLIVFLGTNDCQLTETGYMCPVDEFKNNLLALTRPFPHSKIIIVSPGICTKDICFKREQEPYVIAASETVNTLNKSKANSAGLINLYEITKSYPTPELLFTDGLHFSSLGYSLLFNEIVATISKAWPELLPNNLPLQFPHWSEILFT.

The active-site Nucleophile is Ser46. Asp201 acts as the Proton donor in catalysis. His204 (proton acceptor) is an active-site residue.

This sequence belongs to the 'GDSL' lipolytic enzyme family. IAH1 subfamily.

It localises to the cytoplasm. It catalyses the reaction 3-methylbutyl acetate + H2O = 3-methylbutanol + acetate + H(+). The sequence is that of Isoamyl acetate-hydrolyzing esterase (iah1) from Schizosaccharomyces pombe (strain 972 / ATCC 24843) (Fission yeast).